We begin with the raw amino-acid sequence, 557 residues long: 6-methylpretetramide 4-monooxygenase (557 aa).

Residues 9-38 and 278-288 contribute to the FAD site; these read QVLIAGAGPVGLTLAHELTRRRVRVRVIDR and MRSGRCFVAGD. The disordered stretch occupies residues 530–557; it reads LPEDTAPGAGDSAGRPAPDGTRRGVTTE.

It belongs to the PheA/TfdB FAD monooxygenase family. FAD serves as cofactor.

The catalysed reaction is 6-methylpretetramide + NADPH + O2 + 2 H(+) = 4-hydroxy-6-methylpretetramide + NADP(+) + H2O. It catalyses the reaction 4-hydroxy-6-methylpretetramide + NADPH + O2 = 4-dedimethylamino-4-oxo-anhydrotetracycline + NADP(+) + H2O. It functions in the pathway antibiotic biosynthesis; oxytetracycline biosynthesis. Functionally, involved in the biosynthesis of the tetracycline antibiotic, oxytetracycline. Catalyzes the double hydroxylation of 6-methylpretetramide to yield 4-keto-anhydrotetracycline, via the insertion of oxygen atoms at the C-12a and C-4 positions of 6-pretetramid. The chain is 6-methylpretetramide 4-monooxygenase from Streptomyces rimosus.